A 38-amino-acid chain; its full sequence is Large ribosomal subunit protein bL36 (38 aa).

Belongs to the bacterial ribosomal protein bL36 family.

This Kosmotoga olearia (strain ATCC BAA-1733 / DSM 21960 / TBF 19.5.1) protein is Large ribosomal subunit protein bL36.